A 286-amino-acid chain; its full sequence is Plasma membrane ascorbate-dependent reductase CYBRD1 (286 aa).

Over 1 to 7 (MAMEGYW) the chain is Cytoplasmic. Residues 8–32 (RFLALLGSALLVGFLSVIFALVWVL) traverse the membrane as a helical segment. The Cytochrome b561 domain occupies 15–220 (SALLVGFLSV…FGALIFWIVT (206 aa)). At 33–47 (HYREGLGWDGSALEF) the chain is on the extracellular side. A helical transmembrane segment spans residues 48 to 69 (NWHPVLMVTGFVFIQGIAIIVY). His50, Arg70, and Lys79 together coordinate heme b. The Cytoplasmic portion of the chain corresponds to 70–78 (RLPWTWKCS). L-ascorbate contacts are provided by Lys79 and Lys83. A helical transmembrane segment spans residues 79–105 (KLLMKSIHAGLNAVAAILAIISVVAVF). Heme b is bound at residue His86. The Extracellular segment spans residues 106-118 (ENHNVNNIANMYS). Residue His108 participates in Fe(3+) binding. Residues 115 to 118 (NMYS) and His120 each bind heme b. Residues 119 to 144 (LHSWVGLIAVICYLLQLLSGFSVFLL) traverse the membrane as a helical segment. The Cytoplasmic segment spans residues 145–151 (PWAPLSL). Residue Arg152 coordinates L-ascorbate. The chain crosses the membrane as a helical span at residues 152–179 (RAFLMPIHVYSGIVIFGTVIATALMGLT). Heme b is bound by residues His159 and Glu180. At 180–197 (EKLIFSLRDPAYSTFPPE) the chain is on the extracellular side. The chain crosses the membrane as a helical span at residues 198–222 (GVFVNTLGLLILVFGALIFWIVTRP). At 223–286 (QWKRPKEPNS…LDEAGQRSTM (64 aa)) the chain is on the cytoplasmic side. Lys225 is a binding site for heme b. Residues 229-268 (EPNSTILHPNGGTEQGARGSMPAYSGNNMDKSDSELNSEV) form a disordered region. Phosphoserine is present on Ser232. Position 285 is a phosphothreonine (Thr285).

As to quaternary structure, homodimer. It depends on heme b as a cofactor. In terms of tissue distribution, present in erythrocyte membranes (at protein level). Also expressed in respiratory epithelium.

The protein resides in the cell membrane. It is found in the apical cell membrane. It catalyses the reaction Fe(3+)(out) + L-ascorbate(in) = monodehydro-L-ascorbate radical(in) + Fe(2+)(out) + H(+). It carries out the reaction Cu(2+)(out) + L-ascorbate(in) = Cu(+)(out) + monodehydro-L-ascorbate radical(in) + H(+). The enzyme catalyses monodehydro-L-ascorbate radical(out) + L-ascorbate(in) = monodehydro-L-ascorbate radical(in) + L-ascorbate(out). With respect to regulation, activated by chelators like citrate, malate, and oxalate specially at alkaline pH. Functionally, plasma membrane reductase that uses cytoplasmic ascorbate as an electron donor to reduce extracellular Fe(3+) into Fe(2+). Probably functions in dietary iron absorption at the brush border of duodenal enterocytes by producing Fe(2+), the divalent form of iron that can be transported into enterocytes. It is also able to reduce extracellular monodehydro-L-ascorbate and may be involved in extracellular ascorbate regeneration by erythrocytes in blood. May also act as a ferrireductase in airway epithelial cells. May also function as a cupric transmembrane reductase. The protein is Plasma membrane ascorbate-dependent reductase CYBRD1 of Homo sapiens (Human).